Reading from the N-terminus, the 823-residue chain is Semaphorin-4B (823 aa).

Residues 1 to 30 (MGRASRSAVLRRALLLLLLLLLLRTTTTRA) form the signal peptide. The Extracellular portion of the chain corresponds to 31–703 (LGPRISVPLG…WGADKSYWNE (673 aa)). One can recognise a Sema domain in the interval 34–510 (RISVPLGSEE…SHSGVVQVPV (477 aa)). Residues N53, N56, and N83 are each glycosylated (N-linked (GlcNAc...) asparagine). C107 and C118 form a disulfide bridge. The N-linked (GlcNAc...) asparagine glycan is linked to N129. Cystine bridges form between C136–C145, C273–C386, and C297–C346. Residues N397 and N512 are each glycosylated (N-linked (GlcNAc...) asparagine). Positions 512 to 582 (NCSLYPTCGD…RFLVPGKPCK (71 aa)) constitute a PSI domain. An intrachain disulfide couples C513 to C530. N-linked (GlcNAc...) asparagine glycosylation is found at N567, N615, and N680. The 61-residue stretch at 589-649 (NTVNTLACPL…FQCWSIEEGF (61 aa)) folds into the Ig-like C2-type domain. An intrachain disulfide couples C596 to C642. Residues 704–724 (FLVMCTLFVFAMVLLFLFFLY) form a helical membrane-spanning segment. At 725–823 (RHRDGMKLFL…LGSEIRDSVV (99 aa)) the chain is on the cytoplasmic side. 4 positions are modified to phosphoserine: S779, S780, S804, and S816.

It belongs to the semaphorin family. Interacts with GIPC PDZ domain.

It localises to the membrane. Inhibits axonal extension by providing local signals to specify territories inaccessible for growing axons. In Mus musculus (Mouse), this protein is Semaphorin-4B.